Here is a 67-residue protein sequence, read N- to C-terminus: Gene 51 protein (67 aa).

This Mycobacterium (Mycobacteriophage L5) protein is Gene 51 protein (51).